The following is a 513-amino-acid chain: ATP synthase subunit alpha (513 aa).

172 to 179 (GDRQTGKT) is an ATP binding site.

It belongs to the ATPase alpha/beta chains family. In terms of assembly, F-type ATPases have 2 components, CF(1) - the catalytic core - and CF(0) - the membrane proton channel. CF(1) has five subunits: alpha(3), beta(3), gamma(1), delta(1), epsilon(1). CF(0) has three main subunits: a(1), b(2) and c(9-12). The alpha and beta chains form an alternating ring which encloses part of the gamma chain. CF(1) is attached to CF(0) by a central stalk formed by the gamma and epsilon chains, while a peripheral stalk is formed by the delta and b chains.

The protein localises to the cell inner membrane. It carries out the reaction ATP + H2O + 4 H(+)(in) = ADP + phosphate + 5 H(+)(out). In terms of biological role, produces ATP from ADP in the presence of a proton gradient across the membrane. The alpha chain is a regulatory subunit. This Gluconacetobacter diazotrophicus (strain ATCC 49037 / DSM 5601 / CCUG 37298 / CIP 103539 / LMG 7603 / PAl5) protein is ATP synthase subunit alpha.